Here is a 168-residue protein sequence, read N- to C-terminus: Photosystem I assembly protein Ycf3 (168 aa).

TPR repeat units follow at residues 35–68 (AFTY…EIDP), 72–105 (SYIL…NPFL), and 120–153 (GEQA…TPGN).

It belongs to the Ycf3 family.

Its subcellular location is the plastid. The protein localises to the chloroplast thylakoid membrane. Essential for the assembly of the photosystem I (PSI) complex. May act as a chaperone-like factor to guide the assembly of the PSI subunits. This chain is Photosystem I assembly protein Ycf3, found in Daucus carota (Wild carrot).